The primary structure comprises 125 residues: Holo-[acyl-carrier-protein] synthase (125 aa).

Positions 8 and 57 each coordinate Mg(2+).

The protein belongs to the P-Pant transferase superfamily. AcpS family. Mg(2+) serves as cofactor.

The protein resides in the cytoplasm. The catalysed reaction is apo-[ACP] + CoA = holo-[ACP] + adenosine 3',5'-bisphosphate + H(+). In terms of biological role, transfers the 4'-phosphopantetheine moiety from coenzyme A to a Ser of acyl-carrier-protein. The chain is Holo-[acyl-carrier-protein] synthase from Geobacter sp. (strain M21).